A 116-amino-acid polypeptide reads, in one-letter code: Urease subunit beta (116 aa).

Residues 97–116 (IQGPLDAGTAETAPGLPQQP) form a disordered region.

The protein belongs to the urease beta subunit family. As to quaternary structure, heterotrimer of UreA (gamma), UreB (beta) and UreC (alpha) subunits. Three heterotrimers associate to form the active enzyme.

The protein localises to the cytoplasm. The enzyme catalyses urea + 2 H2O + H(+) = hydrogencarbonate + 2 NH4(+). The protein operates within nitrogen metabolism; urea degradation; CO(2) and NH(3) from urea (urease route): step 1/1. The chain is Urease subunit beta from Paracidovorax citrulli (strain AAC00-1) (Acidovorax citrulli).